The following is a 590-amino-acid chain: MRTHYSSDINEKLQGQKVTVCGWVHRRRDHGGVIFLDIRDRTGLVQLVFNPDNDNFKVADSLRSEFVIKAEGVVNLRPEGQENKNISSGKVEIIGDSIEVINKSKTIPFQLDDFQSTGEDVKLKYRYIDLRRPEMQHKLITRSKAIRYVRNFLDNNGFLDIETPFLTKATPEGARDYLVPSRNFNGKFYALPQSPQLFKQLLMVSGFDRYYQIVKCFRDEDLRADRQPEFTQIDIEASFIDEAFIMSTMERMIAGLFKETIGVEFATPFQVMTFADAIDKYGSDKPDLRIPLEFVNIKEDMQNEEFKVFSGPANDPQSRVIALRIPGGNDKLTRKMIDEYTKFVGIYGAKGLAYIKINSLSQGKEGLQSPIVKNISEETLFKVIDKTSAKEGDLLFFGAGKAKIVNDSMGALRAKIGEDLDLFNKDWAPLWVVDFPMFEKDDNRLYAMHHPFTAPKVSSVEDLVNTNPEELSSRAYDMVINGYEVGGGSIRIHKQDIQAKVFNLLGISDDEAREKFGFMLDALSYGTPIHGGIAFGIDRLIMLLTGTTNIRDVIAFPKTQTASCLMTEAPSTVSLEQLNELGIAVKKEER.

L-aspartate is bound at residue glutamate 172. The tract at residues 196–199 (QLFK) is aspartate. Arginine 218 contacts L-aspartate. Residues 218–220 (RDE) and glutamine 227 contribute to the ATP site. Histidine 449 is an L-aspartate binding site. Glutamate 484 lines the ATP pocket. Residue arginine 491 coordinates L-aspartate. Residue 536–539 (GIDR) participates in ATP binding.

This sequence belongs to the class-II aminoacyl-tRNA synthetase family. Type 1 subfamily. In terms of assembly, homodimer.

It localises to the cytoplasm. It carries out the reaction tRNA(Asx) + L-aspartate + ATP = L-aspartyl-tRNA(Asx) + AMP + diphosphate. Functionally, aspartyl-tRNA synthetase with relaxed tRNA specificity since it is able to aspartylate not only its cognate tRNA(Asp) but also tRNA(Asn). Reaction proceeds in two steps: L-aspartate is first activated by ATP to form Asp-AMP and then transferred to the acceptor end of tRNA(Asp/Asn). This Francisella tularensis subsp. tularensis (strain SCHU S4 / Schu 4) protein is Aspartate--tRNA(Asp/Asn) ligase.